Reading from the N-terminus, the 400-residue chain is Subtilisin-like protease 1 (400 aa).

A signal peptide spans Met1–Ala20. Residues Ala21–Asn119 constitute a propeptide that is removed on maturation. The 76-residue stretch at Ser42 to Gln117 folds into the Inhibitor I9 domain. The N-linked (GlcNAc...) asparagine glycan is linked to Asn82. Residues Thr128 to Ala400 form the Peptidase S8 domain. Catalysis depends on charge relay system residues Asp160, His192, and Ser345.

Belongs to the peptidase S8 family.

The protein resides in the secreted. Its function is as follows. Major secreted subtilisin-like serine endopeptidase. Mediates the degradation of collagen, the major structural protein in the mammalian host. Degrades the nonhelical regions of collagen that function in the cross-linking of the helical components. May function as virulence factor involved in epidermal wing necrosis observed in white nose syndrome (WNS) in bats. This is Subtilisin-like protease 1 from Pseudogymnoascus destructans (strain ATCC MYA-4855 / 20631-21) (Bat white-nose syndrome fungus).